We begin with the raw amino-acid sequence, 417 residues long: Echinulin prenyltransferase 1 (417 aa).

Residues Arg90, Lys179, Tyr181, Lys248, Tyr250, Tyr333, Tyr398, and Tyr402 each contribute to the dimethylallyl diphosphate site.

Belongs to the tryptophan dimethylallyltransferase family.

It carries out the reaction cyclo(L-tryptophyl-L-alanyl) + dimethylallyl diphosphate = preechinulin + diphosphate. It participates in secondary metabolite biosynthesis. Its pathway is alkaloid biosynthesis. Prenyltransferase; part of the gene cluster that mediates the biosynthesis of echinulin family alkaloid. The pathway begins with the biosynthesis of the cyclic dipeptide cyclo-L-Trp-L-Ala (cyclo-TA) by the NRPS echPS via condensation of L-alanine and L-tryptophan. The prenyltransferase echPT1 then catalyzes the first prenylation step, a reverse prenylation reaction at C2, to yield preechinulin. Preechinulin is the substrate of the cytochrome P450 monooxygenase echP450 that catalyzes the formation of the double bond between C10 and C11 to produce neoechulin A. The unique prenyltransferase echPT2 functions as a competitive enzyme with echP450 for preechinulin metabolization and uses preechinulin for effective regiospecific prenylations. Preechinulin is prenylated by echPT2 at C5 or C7. C7-prenylation leads to accumulation of tardioxopiperazine B without further modification by echPT2. In contrast, the C5-prenylated tardioxopiperazine A can be prenylated again by echPT2, predominantly at C7 to form echinulin or less frequently at C4 to give variecolorin L. EchPT2 also accepts neoechilunin A to produce varlecolorin G (prenylation at C5) or isoechinulin A (prenylation at C7). EchPT2 further converts isoechinulin A into dehydroechinulin. Moreover, a yet unidentified enzyme can also convert neoechilunin A into neoechilunin B by introducing a double bond between positions C14 and C17 and thus provides a further substrate to echPT2 for C5 and C7 prenylation. The polypeptide is Echinulin prenyltransferase 1 (Aspergillus ruber (Eurotium rubrum)).